A 117-amino-acid chain; its full sequence is Holo-[acyl-carrier-protein] synthase (117 aa).

Aspartate 8 and glutamate 57 together coordinate Mg(2+).

Belongs to the P-Pant transferase superfamily. AcpS family. It depends on Mg(2+) as a cofactor.

It localises to the cytoplasm. The catalysed reaction is apo-[ACP] + CoA = holo-[ACP] + adenosine 3',5'-bisphosphate + H(+). Transfers the 4'-phosphopantetheine moiety from coenzyme A to a Ser of acyl-carrier-protein. The protein is Holo-[acyl-carrier-protein] synthase of Limosilactobacillus reuteri (Lactobacillus reuteri).